Reading from the N-terminus, the 835-residue chain is Protein translocase subunit SecA (835 aa).

ATP contacts are provided by residues Q85, 103–107, and D492; that span reads GEGKT. The tract at residues 788–807 is disordered; it reads VQGEAVHPSSDGEEAKKKPV. Residues C819, C821, C830, and C831 each contribute to the Zn(2+) site.

This sequence belongs to the SecA family. Monomer and homodimer. Part of the essential Sec protein translocation apparatus which comprises SecA, SecYEG and auxiliary proteins SecDF. Other proteins may also be involved. It depends on Zn(2+) as a cofactor.

The protein localises to the cell membrane. It localises to the cytoplasm. It carries out the reaction ATP + H2O + cellular proteinSide 1 = ADP + phosphate + cellular proteinSide 2.. Its function is as follows. Part of the Sec protein translocase complex. Interacts with the SecYEG preprotein conducting channel. Has a central role in coupling the hydrolysis of ATP to the transfer of proteins into and across the cell membrane, serving as an ATP-driven molecular motor driving the stepwise translocation of polypeptide chains across the membrane. This Bacillus cereus (strain B4264) protein is Protein translocase subunit SecA.